The primary structure comprises 458 residues: UDP-N-acetylmuramoylalanine--D-glutamate ligase (458 aa).

Gly-124–Thr-130 lines the ATP pocket.

This sequence belongs to the MurCDEF family.

It localises to the cytoplasm. It catalyses the reaction UDP-N-acetyl-alpha-D-muramoyl-L-alanine + D-glutamate + ATP = UDP-N-acetyl-alpha-D-muramoyl-L-alanyl-D-glutamate + ADP + phosphate + H(+). It participates in cell wall biogenesis; peptidoglycan biosynthesis. Its function is as follows. Cell wall formation. Catalyzes the addition of glutamate to the nucleotide precursor UDP-N-acetylmuramoyl-L-alanine (UMA). This Clostridium botulinum (strain Alaska E43 / Type E3) protein is UDP-N-acetylmuramoylalanine--D-glutamate ligase.